Consider the following 600-residue polypeptide: Proline--tRNA ligase (600 aa).

Belongs to the class-II aminoacyl-tRNA synthetase family. ProS type 1 subfamily. Homodimer.

Its subcellular location is the cytoplasm. It catalyses the reaction tRNA(Pro) + L-proline + ATP = L-prolyl-tRNA(Pro) + AMP + diphosphate. Catalyzes the attachment of proline to tRNA(Pro) in a two-step reaction: proline is first activated by ATP to form Pro-AMP and then transferred to the acceptor end of tRNA(Pro). As ProRS can inadvertently accommodate and process non-cognate amino acids such as alanine and cysteine, to avoid such errors it has two additional distinct editing activities against alanine. One activity is designated as 'pretransfer' editing and involves the tRNA(Pro)-independent hydrolysis of activated Ala-AMP. The other activity is designated 'posttransfer' editing and involves deacylation of mischarged Ala-tRNA(Pro). The misacylated Cys-tRNA(Pro) is not edited by ProRS. In Synechococcus sp. (strain RCC307), this protein is Proline--tRNA ligase.